The following is a 381-amino-acid chain: MAMNIRKIHPLLKIMNQTLIDLPAPSNISIWWNFGSLLGLCLVIQIVTGLFLAMHYTADITMAFSSVTHICRDVNYGWLIRNIHANGASLFFVCIYFHIARGLYYGSYLYKETWNIGVILLFLLMATAFVGYVLPWGQMSFWGATVITNLLSAFPYIGDTLVQWIWGGFSVDNATLTRFFAFHFLLPFLITALMIIHILFLHETGSNNPMGLNSDMDKISFHPYFIYKDALGFLSLLILLGILALFLPNLLGDTENFIPANPLVTPPHIKPEWYFLFAYAILRSIPNKLGGVLALLFSILILMLVPFLHTSKQRSSTFRPLTQVFFWILVANMLVLTWIGGQPVEQPFILIGQIASISYFSLFLIAIPLAGWWENKILGLN.

4 helical membrane passes run 34 to 54, 78 to 99, 114 to 134, and 179 to 199; these read FGSL…FLAM, WLIR…YFHI, WNIG…GYVL, and FFAF…IHIL. Residues His84 and His98 each coordinate heme b. Heme b-binding residues include His183 and His197. Position 202 (His202) interacts with a ubiquinone. The next 4 membrane-spanning stretches (helical) occupy residues 227–247, 289–309, 321–341, and 348–368; these read YKDA…ALFL, LGGV…PFLH, LTQV…WIGG, and FILI…IAIP.

It belongs to the cytochrome b family. The cytochrome bc1 complex contains 3 respiratory subunits (MT-CYB, CYC1 and UQCRFS1), 2 core proteins (UQCRC1 and UQCRC2) and probably 6 low-molecular weight proteins. Requires heme b as cofactor.

Its subcellular location is the mitochondrion inner membrane. Component of the ubiquinol-cytochrome c reductase complex (complex III or cytochrome b-c1 complex) that is part of the mitochondrial respiratory chain. The b-c1 complex mediates electron transfer from ubiquinol to cytochrome c. Contributes to the generation of a proton gradient across the mitochondrial membrane that is then used for ATP synthesis. This chain is Cytochrome b (mt-cyb), found in Carcharodon carcharias (Great white shark).